The primary structure comprises 202 residues: Orotate phosphoribosyltransferase (202 aa).

5-phospho-alpha-D-ribose 1-diphosphate is bound by residues lysine 93 and 113 to 121; that span reads EDIITTGGS. Positions 117 and 145 each coordinate orotate.

Belongs to the purine/pyrimidine phosphoribosyltransferase family. PyrE subfamily. In terms of assembly, homodimer. The cofactor is Mg(2+).

The catalysed reaction is orotidine 5'-phosphate + diphosphate = orotate + 5-phospho-alpha-D-ribose 1-diphosphate. Its pathway is pyrimidine metabolism; UMP biosynthesis via de novo pathway; UMP from orotate: step 1/2. In terms of biological role, catalyzes the transfer of a ribosyl phosphate group from 5-phosphoribose 1-diphosphate to orotate, leading to the formation of orotidine monophosphate (OMP). The sequence is that of Orotate phosphoribosyltransferase from Campylobacter hominis (strain ATCC BAA-381 / DSM 21671 / CCUG 45161 / LMG 19568 / NCTC 13146 / CH001A).